The chain runs to 394 residues: Phenylalanine 4-monooxygenase, chloroplastic (394 aa).

The N-terminal 79 residues, 1–79 (MAMEVGYLRH…LNQIQAVSTA (79 aa)), are a transit peptide targeting the chloroplast. The disordered stretch occupies residues 75 to 97 (AVSTAEKEREADKTSTPPIPSSI). Fe cation is bound by residues His252, His257, and Glu297.

The protein belongs to the biopterin-dependent aromatic amino acid hydroxylase family. In terms of assembly, forms monomers. The cofactor is Fe(2+).

It localises to the plastid. The protein localises to the chloroplast. It catalyses the reaction (6R)-L-erythro-5,6,7,8-tetrahydrobiopterin + L-phenylalanine + O2 = (4aS,6R)-4a-hydroxy-L-erythro-5,6,7,8-tetrahydrobiopterin + L-tyrosine. In terms of biological role, catalyzes the hydroxylation of L-phenylalanine to L-tyrosine. Does not seem to be tetrahydropterin-dependent and shows preference for 10-formyltetrahydrofolate as cosubstrate and electron donor. In Physcomitrium patens (Spreading-leaved earth moss), this protein is Phenylalanine 4-monooxygenase, chloroplastic.